The following is a 428-amino-acid chain: Serine--tRNA ligase (428 aa).

231 to 233 (TAE) provides a ligand contact to L-serine. Residue 262 to 264 (RSE) coordinates ATP. Glu-285 contributes to the L-serine binding site. An ATP-binding site is contributed by 349–352 (EISS). Ser-385 is an L-serine binding site.

Belongs to the class-II aminoacyl-tRNA synthetase family. Type-1 seryl-tRNA synthetase subfamily. Homodimer. The tRNA molecule binds across the dimer.

The protein localises to the cytoplasm. The enzyme catalyses tRNA(Ser) + L-serine + ATP = L-seryl-tRNA(Ser) + AMP + diphosphate + H(+). The catalysed reaction is tRNA(Sec) + L-serine + ATP = L-seryl-tRNA(Sec) + AMP + diphosphate + H(+). Its pathway is aminoacyl-tRNA biosynthesis; selenocysteinyl-tRNA(Sec) biosynthesis; L-seryl-tRNA(Sec) from L-serine and tRNA(Sec): step 1/1. Its function is as follows. Catalyzes the attachment of serine to tRNA(Ser). Is also able to aminoacylate tRNA(Sec) with serine, to form the misacylated tRNA L-seryl-tRNA(Sec), which will be further converted into selenocysteinyl-tRNA(Sec). The sequence is that of Serine--tRNA ligase from Cellvibrio japonicus (strain Ueda107) (Pseudomonas fluorescens subsp. cellulosa).